The sequence spans 299 residues: Bifunctional phosphoglucose/phosphomannose isomerase (299 aa).

An SIS domain is found at 27 to 177 (DEVEITPSSR…IHKLMEDFQK (151 aa)). The D-fructose 6-phosphate site is built by glycine 44, serine 45, serine 84, serine 86, threonine 89, and arginine 132. The active-site Proton acceptor is glutamate 200. The D-fructose 6-phosphate site is built by histidine 216 and lysine 295. Histidine 216 functions as the Proton donor in the catalytic mechanism. Residue lysine 295 is the Proton acceptor of the active site.

Belongs to the PGI/PMI family. As to quaternary structure, homodimer.

The enzyme catalyses alpha-D-glucose 6-phosphate = beta-D-fructose 6-phosphate. It carries out the reaction D-mannose 6-phosphate = D-fructose 6-phosphate. With respect to regulation, presence or absence of metal ions or EDTA does not significantly affect the phosphoglucose isomerase activity. Functionally, dual specificity isomerase that catalyzes the isomerization of both glucose-6-phosphate and mannose-6-phosphate to fructose-6-phosphate with nearly similar catalytic efficiency. Also catalyzes the epimerization of mannose 6-phosphate to glucose 6-phosphate but the rate of epimerization reaction is 20-fold lower than that of isomerization reaction. This chain is Bifunctional phosphoglucose/phosphomannose isomerase, found in Pyrobaculum calidifontis (strain DSM 21063 / JCM 11548 / VA1).